Here is a 191-residue protein sequence, read N- to C-terminus: Auxin-responsive protein IAA32 (191 aa).

An EAR-like (transcriptional repression) motif is present at residues 32–36 (LGLSL). The 87-residue stretch at 98-184 (YAYVKVNLDG…SVDRMRIARR (87 aa)) folds into the PB1 domain.

This sequence belongs to the Aux/IAA family. As to quaternary structure, homodimers and heterodimers.

The protein resides in the nucleus. In terms of biological role, aux/IAA proteins are short-lived transcriptional factors that function as repressors of early auxin response genes at low auxin concentrations. Repression is thought to result from the interaction with auxin response factors (ARFs), proteins that bind to the auxin-responsive promoter element (AuxRE). Formation of heterodimers with ARF proteins may alter their ability to modulate early auxin response genes expression. The chain is Auxin-responsive protein IAA32 from Arabidopsis thaliana (Mouse-ear cress).